The primary structure comprises 680 residues: Multisubstrate pseudouridine synthase 7 (680 aa).

2 stretches are compositionally biased toward basic and acidic residues: residues 1–30 (MSQE…RNGL) and 99–116 (ILSK…KDSS). Disordered regions lie at residues 1 to 42 (MSQE…DLSG), 99 to 136 (ILSK…EPAT), and 206 to 229 (TKGN…RRDP). Over residues 206 to 216 (TKGNGTFTVSK) the composition is skewed to polar residues. The Nucleophile role is filled by D277. The TRUD domain occupies 358–596 (GFINYFGLQR…PGDYRKLLVR (239 aa)).

The protein belongs to the pseudouridine synthase TruD family.

It localises to the nucleus. Its subcellular location is the cytoplasm. The enzyme catalyses uridine in 5S rRNA = pseudouridine in 5S rRNA. It carries out the reaction uridine in snRNA = pseudouridine in snRNA. The catalysed reaction is uridine(13) in tRNA = pseudouridine(13) in tRNA. It catalyses the reaction a uridine in mRNA = a pseudouridine in mRNA. Functionally, catalyzes pseudouridylation at position 35 in U2 snRNA stem-loop II region which induces particular conformation of the mRNA-U2 snRNA duplex and places the nucleophile in an accessible position for the first step of splicing. Also catalyzes pseudouridylation at position 56 in U2 snRNA. Also catalyzes pseudouridylation at position 50 in 5S rRNA, position 13 in cytoplasmic tRNAs, and position 35 in pre-tRNA(Tyr). Pseudouridine residues in tRNAs may stabilize the local RNA conformation, favor interactions with protein partners and play an important role in the stabilization of the codon-anticodon interaction with mRNA. Also catalyzes pseudouridylation of mRNAs in response to heat shock: mediates pseudouridylation of mRNAs with the consensus sequence 5'-UGUAR-3'. The protein is Multisubstrate pseudouridine synthase 7 (pus7) of Schizosaccharomyces pombe (strain 972 / ATCC 24843) (Fission yeast).